We begin with the raw amino-acid sequence, 298 residues long: Anamorsin homolog (298 aa).

Residues 1-143 (MTQLIITYQS…IKAEKPSWKP (143 aa)) are N-terminal SAM-like domain. The linker stretch occupies residues 143–162 (PEEGKVLVDDIDLEGSVPDI). The [2Fe-2S] cluster site is built by C175, C182, C185, and C187. The interval 175-187 (CKSKERACNNCNC) is fe-S binding site A. C218, C221, C229, and C232 together coordinate [4Fe-4S] cluster. 2 consecutive short sequence motifs (cx2C motif) follow at residues 218-221 (CGNC) and 229-232 (CSGC). The interval 218-232 (CGNCYLGDAFRCSGC) is fe-S binding site B.

It belongs to the anamorsin family. As to quaternary structure, monomer. It depends on [2Fe-2S] cluster as a cofactor. [4Fe-4S] cluster serves as cofactor.

The protein resides in the cytoplasm. It localises to the mitochondrion intermembrane space. Functionally, component of the cytosolic iron-sulfur (Fe-S) protein assembly (CIA) machinery. Required for the maturation of extramitochondrial Fe-S proteins. Part of an electron transfer chain functioning in an early step of cytosolic Fe-S biogenesis, facilitating the de novo assembly of a [4Fe-4S] cluster on the cytosolic Fe-S scaffold complex. Electrons are transferred from NADPH via a FAD- and FMN-containing diflavin oxidoreductase. Together with the diflavin oxidoreductase, also required for the assembly of the diferric tyrosyl radical cofactor of ribonucleotide reductase (RNR), probably by providing electrons for reduction during radical cofactor maturation in the catalytic small subunit. The protein is Anamorsin homolog of Cryptosporidium hominis.